Consider the following 357-residue polypeptide: AA9 family lytic polysaccharide monooxygenase B (357 aa).

The first 18 residues, 1-18, serve as a signal peptide directing secretion; sequence MKFSSVLALAASAKLVAS. Residues histidine 19 and histidine 101 each contribute to the Cu(2+) site. The interval 19 to 234 is catalytic; sequence HATVFAVWIN…IPGPAVWDGA (216 aa). A disulfide bridge links cysteine 61 with cysteine 182. The O2 site is built by histidine 168 and glutamine 177. Residue tyrosine 179 participates in Cu(2+) binding. The interval 235–318 is ser/Thr-rich linker; sequence SSGSGSSGSG…SAAPTGGTGT (84 aa). The tract at residues 292 to 317 is disordered; sequence SVRPTTSAAPTTSAPTSSAAPTGGTG. Positions 295-313 are enriched in low complexity; that stretch reads PTTSAAPTTSAPTSSAAPT. A CBM1 domain is found at 319-355; the sequence is GSIQIYQQCGGMNYKGATGCASGLTCKQWNPYYHQCV.

Belongs to the polysaccharide monooxygenase AA9 family. Cu(2+) serves as cofactor.

Its subcellular location is the secreted. It carries out the reaction [(1-&gt;4)-beta-D-glucosyl]n+m + reduced acceptor + O2 = 4-dehydro-beta-D-glucosyl-[(1-&gt;4)-beta-D-glucosyl]n-1 + [(1-&gt;4)-beta-D-glucosyl]m + acceptor + H2O.. Its function is as follows. Lytic polysaccharide monooxygenase (LPMO) that depolymerizes crystalline and amorphous polysaccharides via the oxidation of scissile alpha- or beta-(1-4)-glycosidic bonds, yielding C4 oxidation products. Catalysis by LPMOs requires the reduction of the active-site copper from Cu(II) to Cu(I) by a reducing agent and H(2)O(2) or O(2) as a cosubstrate. Active on carboxymethylcellulose (CMC), hydroxyethylcellulose (HEC) and beta-glucan. Also active on soluble cellohexaose, a property that is restricted to only a few characterized LPMOs. This chain is AA9 family lytic polysaccharide monooxygenase B, found in Emericella nidulans (strain FGSC A4 / ATCC 38163 / CBS 112.46 / NRRL 194 / M139) (Aspergillus nidulans).